We begin with the raw amino-acid sequence, 314 residues long: ATP synthase gamma chain (314 aa).

Belongs to the ATPase gamma chain family. In terms of assembly, F-type ATPases have 2 components, CF(1) - the catalytic core - and CF(0) - the membrane proton channel. CF(1) has five subunits: alpha(3), beta(3), gamma(1), delta(1), epsilon(1). CF(0) has three main subunits: a, b and c.

Its subcellular location is the cellular thylakoid membrane. In terms of biological role, produces ATP from ADP in the presence of a proton gradient across the membrane. The gamma chain is believed to be important in regulating ATPase activity and the flow of protons through the CF(0) complex. This chain is ATP synthase gamma chain, found in Synechococcus sp. (strain JA-3-3Ab) (Cyanobacteria bacterium Yellowstone A-Prime).